The sequence spans 433 residues: Glutamate-1-semialdehyde 2,1-aminomutase (433 aa).

Position 271 is an N6-(pyridoxal phosphate)lysine (Lys-271).

Belongs to the class-III pyridoxal-phosphate-dependent aminotransferase family. HemL subfamily. In terms of assembly, homodimer. Requires pyridoxal 5'-phosphate as cofactor.

It is found in the cytoplasm. It catalyses the reaction (S)-4-amino-5-oxopentanoate = 5-aminolevulinate. The protein operates within porphyrin-containing compound metabolism; protoporphyrin-IX biosynthesis; 5-aminolevulinate from L-glutamyl-tRNA(Glu): step 2/2. Its pathway is porphyrin-containing compound metabolism; chlorophyll biosynthesis. This is Glutamate-1-semialdehyde 2,1-aminomutase from Prochlorococcus marinus (strain MIT 9515).